We begin with the raw amino-acid sequence, 373 residues long: RNA 3'-terminal phosphate cyclase-like protein (373 aa).

The protein belongs to the RNA 3'-terminal cyclase family. Type 2 subfamily. In terms of assembly, part of the small subunit (SSU) processome, composed of more than 70 proteins and the RNA chaperone small nucleolar RNA (snoRNA) U3. Interacts with BMS1.

It localises to the nucleus. It is found in the nucleolus. Functionally, as part of the small subunit (SSU) processome, it plays a role in 40S-ribosomal-subunit biogenesis in the early pre-rRNA processing steps at sites A0, A1 and A2 that are required for proper maturation of the 18S RNA. Activates BMS1 by promoting GDP/GTP exchange. Does not have cyclase activity. This Mus musculus (Mouse) protein is RNA 3'-terminal phosphate cyclase-like protein (Rcl1).